Reading from the N-terminus, the 288-residue chain is Bifunctional protein FolD (288 aa).

NADP(+) is bound by residues 166 to 168 (GRS), Ser-191, and Ile-232.

This sequence belongs to the tetrahydrofolate dehydrogenase/cyclohydrolase family. In terms of assembly, homodimer.

It catalyses the reaction (6R)-5,10-methylene-5,6,7,8-tetrahydrofolate + NADP(+) = (6R)-5,10-methenyltetrahydrofolate + NADPH. It carries out the reaction (6R)-5,10-methenyltetrahydrofolate + H2O = (6R)-10-formyltetrahydrofolate + H(+). The protein operates within one-carbon metabolism; tetrahydrofolate interconversion. Functionally, catalyzes the oxidation of 5,10-methylenetetrahydrofolate to 5,10-methenyltetrahydrofolate and then the hydrolysis of 5,10-methenyltetrahydrofolate to 10-formyltetrahydrofolate. The sequence is that of Bifunctional protein FolD from Rickettsia canadensis (strain McKiel).